The sequence spans 162 residues: SsrA-binding protein (162 aa).

It belongs to the SmpB family.

Its subcellular location is the cytoplasm. In terms of biological role, required for rescue of stalled ribosomes mediated by trans-translation. Binds to transfer-messenger RNA (tmRNA), required for stable association of tmRNA with ribosomes. tmRNA and SmpB together mimic tRNA shape, replacing the anticodon stem-loop with SmpB. tmRNA is encoded by the ssrA gene; the 2 termini fold to resemble tRNA(Ala) and it encodes a 'tag peptide', a short internal open reading frame. During trans-translation Ala-aminoacylated tmRNA acts like a tRNA, entering the A-site of stalled ribosomes, displacing the stalled mRNA. The ribosome then switches to translate the ORF on the tmRNA; the nascent peptide is terminated with the 'tag peptide' encoded by the tmRNA and targeted for degradation. The ribosome is freed to recommence translation, which seems to be the essential function of trans-translation. This is SsrA-binding protein from Sorangium cellulosum (strain So ce56) (Polyangium cellulosum (strain So ce56)).